Here is a 77-residue protein sequence, read N- to C-terminus: Acyl carrier protein (77 aa).

A Carrier domain is found at 2-77 (SSIDKRIKEI…DAIDYITDHT (76 aa)). At Ser-37 the chain carries O-(pantetheine 4'-phosphoryl)serine.

It belongs to the acyl carrier protein (ACP) family. 4'-phosphopantetheine is transferred from CoA to a specific serine of apo-ACP by AcpS. This modification is essential for activity because fatty acids are bound in thioester linkage to the sulfhydryl of the prosthetic group.

It is found in the cytoplasm. It functions in the pathway lipid metabolism; fatty acid biosynthesis. Functionally, carrier of the growing fatty acid chain in fatty acid biosynthesis. The sequence is that of Acyl carrier protein from Geotalea daltonii (strain DSM 22248 / JCM 15807 / FRC-32) (Geobacter daltonii).